The chain runs to 431 residues: Probable indole-3-pyruvate monooxygenase YUCCA7 (431 aa).

Residue 36-41 participates in FAD binding; sequence GAGPSG. Residue 207–212 coordinates NADP(+); sequence GCGNSG.

The protein belongs to the FMO family. FAD serves as cofactor. In terms of tissue distribution, expressed in shoot apex regions and siliques, and at high levels in roots. Detected in flowers, stems and leaves.

It catalyses the reaction indole-3-pyruvate + NADPH + O2 + H(+) = (indol-3-yl)acetate + CO2 + NADP(+) + H2O. Its pathway is plant hormone metabolism; auxin biosynthesis. Functionally, involved in auxin biosynthesis. Belongs to the set of redundant YUCCA genes probably responsible for auxin biosynthesis in roots. This chain is Probable indole-3-pyruvate monooxygenase YUCCA7 (YUC7), found in Arabidopsis thaliana (Mouse-ear cress).